Reading from the N-terminus, the 185-residue chain is ATP synthase subunit delta, chloroplastic (185 aa).

The protein belongs to the ATPase delta chain family. As to quaternary structure, F-type ATPases have 2 components, F(1) - the catalytic core - and F(0) - the membrane proton channel. F(1) has five subunits: alpha(3), beta(3), gamma(1), delta(1), epsilon(1). CF(0) has four main subunits: a(1), b(1), b'(1) and c(10-14). The alpha and beta chains form an alternating ring which encloses part of the gamma chain. F(1) is attached to F(0) by a central stalk formed by the gamma and epsilon chains, while a peripheral stalk is formed by the delta, b and b' chains.

The protein localises to the plastid. The protein resides in the chloroplast thylakoid membrane. Functionally, f(1)F(0) ATP synthase produces ATP from ADP in the presence of a proton or sodium gradient. F-type ATPases consist of two structural domains, F(1) containing the extramembraneous catalytic core and F(0) containing the membrane proton channel, linked together by a central stalk and a peripheral stalk. During catalysis, ATP synthesis in the catalytic domain of F(1) is coupled via a rotary mechanism of the central stalk subunits to proton translocation. Its function is as follows. This protein is part of the stalk that links CF(0) to CF(1). It either transmits conformational changes from CF(0) to CF(1) or is implicated in proton conduction. This is ATP synthase subunit delta, chloroplastic from Gracilaria tenuistipitata var. liui (Red alga).